The sequence spans 118 residues: Hydrogenase maturation factor HypA (118 aa).

His-2 serves as a coordination point for Ni(2+). Residues Cys-73, Cys-76, Cys-93, and Cys-96 each coordinate Zn(2+).

This sequence belongs to the HypA/HybF family.

In terms of biological role, involved in the maturation of [NiFe] hydrogenases. Required for nickel insertion into the metal center of the hydrogenase. In Lawsonia intracellularis (strain PHE/MN1-00), this protein is Hydrogenase maturation factor HypA.